Here is a 47-residue protein sequence, read N- to C-terminus: UPF0391 membrane protein rrnAC2507 (47 aa).

2 helical membrane passes run 5 to 25 (VVLV…IAGL) and 27 to 47 (FRVA…TFLL).

It belongs to the UPF0391 family.

The protein localises to the cell membrane. This is UPF0391 membrane protein rrnAC2507 from Haloarcula marismortui (strain ATCC 43049 / DSM 3752 / JCM 8966 / VKM B-1809) (Halobacterium marismortui).